We begin with the raw amino-acid sequence, 362 residues long: Transcription factor Sox-7 (362 aa).

Residues 21-41 (EDLSDGLSPHRSPREKGSETR) form a disordered region. The span at 32-41 (SPREKGSETR) shows a compositional bias: basic and acidic residues. The segment at residues 42–110 (IRRPMNAFMV…QHMQDYPNYK (69 aa)) is a DNA-binding region (HMG box). The Sox C-terminal domain maps to 245-362 (QTGSSMIPPV…ATYYNSYSVS (118 aa)).

Expressed in the embryonic pronephric sinus as well as posterior cardinal veins.

The protein resides in the nucleus. Functionally, transcription factor. Binds to the DNA sequence 5'-AACAAT-3'. Acts downstream of vegt and upstream of nodal signaling to promote endodermal and mesodermal differentiation by promoting vegt-induced expression of both endodermal genes (including endodermin) and mesodermal genes (including snai1/snail and snai2/slug). Induces expression of multiple nodal genes (including nodal, nodal2, nodal4, nodal5 and nodal6) and binds directly to sites within the promoter of the nodal5 gene. The endodermal and mesodermal specification pathways then interact to initiate cardiogenesis. Acts partially redundantly with sox18 during cardiogenesis. Also acts as an antagonist of beta-catenin signaling. Regulates (possibly indirectly) development of the pronephros, the functional larval kidney. In Xenopus tropicalis (Western clawed frog), this protein is Transcription factor Sox-7.